The following is a 236-amino-acid chain: Leucyl/phenylalanyl-tRNA--protein transferase (236 aa).

Residues 1–13 (MNSLSYLNQDQQS) are compositionally biased toward polar residues. Residues 1-22 (MNSLSYLNQDQQSFPPPEQALS) are disordered.

It belongs to the L/F-transferase family.

Its subcellular location is the cytoplasm. It catalyses the reaction N-terminal L-lysyl-[protein] + L-leucyl-tRNA(Leu) = N-terminal L-leucyl-L-lysyl-[protein] + tRNA(Leu) + H(+). It carries out the reaction N-terminal L-arginyl-[protein] + L-leucyl-tRNA(Leu) = N-terminal L-leucyl-L-arginyl-[protein] + tRNA(Leu) + H(+). The enzyme catalyses L-phenylalanyl-tRNA(Phe) + an N-terminal L-alpha-aminoacyl-[protein] = an N-terminal L-phenylalanyl-L-alpha-aminoacyl-[protein] + tRNA(Phe). Its function is as follows. Functions in the N-end rule pathway of protein degradation where it conjugates Leu, Phe and, less efficiently, Met from aminoacyl-tRNAs to the N-termini of proteins containing an N-terminal arginine or lysine. The polypeptide is Leucyl/phenylalanyl-tRNA--protein transferase (Shewanella piezotolerans (strain WP3 / JCM 13877)).